Reading from the N-terminus, the 270-residue chain is Orotidine 5'-phosphate decarboxylase (270 aa).

Catalysis depends on K89, which acts as the Proton donor.

Belongs to the OMP decarboxylase family. Type 2 subfamily.

It catalyses the reaction orotidine 5'-phosphate + H(+) = UMP + CO2. It participates in pyrimidine metabolism; UMP biosynthesis via de novo pathway; UMP from orotate: step 2/2. The chain is Orotidine 5'-phosphate decarboxylase from Dehalococcoides mccartyi (strain ATCC BAA-2100 / JCM 16839 / KCTC 5957 / BAV1).